The chain runs to 111 residues: MMKGGMAGLMKQAQQMQEKMAKMQEELANAEVTGQSGGGLVSVVMTGRHDVKRVSIDQSLMSTEEDDKEVLEDLIAAALNDAVRKVEQSSQEKMGGMTAGMQLPPGFKMPF.

A disordered region spans residues 87–111 (EQSSQEKMGGMTAGMQLPPGFKMPF).

The protein belongs to the YbaB/EbfC family. In terms of assembly, homodimer.

It localises to the cytoplasm. It is found in the nucleoid. In terms of biological role, binds to DNA and alters its conformation. May be involved in regulation of gene expression, nucleoid organization and DNA protection. The polypeptide is Nucleoid-associated protein PputW619_3586 (Pseudomonas putida (strain W619)).